A 378-amino-acid chain; its full sequence is Chaperone protein DnaJ (378 aa).

The J domain occupies 5–70 (DFYEILGVSK…EKRSAYDRMG (66 aa)). The segment at 137 to 215 (GCKKEISFTA…CHGNGVKDKS (79 aa)) adopts a CR-type zinc-finger fold. Zn(2+)-binding residues include Cys-150, Cys-153, Cys-167, Cys-170, Cys-189, Cys-192, Cys-203, and Cys-206. 4 CXXCXGXG motif repeats span residues 150 to 157 (CDTCDGKG), 167 to 174 (CQTCHGQG), 189 to 196 (CPHCGGTG), and 203 to 210 (CSDCHGNG).

This sequence belongs to the DnaJ family. In terms of assembly, homodimer. Zn(2+) is required as a cofactor.

It is found in the cytoplasm. Participates actively in the response to hyperosmotic and heat shock by preventing the aggregation of stress-denatured proteins and by disaggregating proteins, also in an autonomous, DnaK-independent fashion. Unfolded proteins bind initially to DnaJ; upon interaction with the DnaJ-bound protein, DnaK hydrolyzes its bound ATP, resulting in the formation of a stable complex. GrpE releases ADP from DnaK; ATP binding to DnaK triggers the release of the substrate protein, thus completing the reaction cycle. Several rounds of ATP-dependent interactions between DnaJ, DnaK and GrpE are required for fully efficient folding. Also involved, together with DnaK and GrpE, in the DNA replication of plasmids through activation of initiation proteins. This chain is Chaperone protein DnaJ, found in Psychrobacter cryohalolentis (strain ATCC BAA-1226 / DSM 17306 / VKM B-2378 / K5).